Here is a 459-residue protein sequence, read N- to C-terminus: Vacuolar amino acid transporter 5 (459 aa).

8 consecutive transmembrane segments (helical) span residues 8–28 (GVLT…PFAF), 33–53 (LMPG…GLLL), 82–102 (VVFD…YLII), 131–151 (FLDR…PLCF), 161–181 (ASMI…YHFV), 206–226 (LTTL…FSVI), 240–260 (IPIF…GTGY), and 278–298 (SIST…AFPL). A compositionally biased stretch (polar residues) spans 335-351 (FNSEDPQEAPTQQNNEE). Positions 335–354 (FNSEDPQEAPTQQNNEEPNL) are disordered. 3 helical membrane passes run 364 to 384 (IITL…TSLA), 386 to 406 (VLAI…PGLF), and 434 to 454 (LSLF…IVFL).

The protein belongs to the amino acid/polyamine transporter 2 family.

It localises to the vacuole membrane. In terms of biological role, probable amino acid transporter of unknown specificity. The polypeptide is Vacuolar amino acid transporter 5 (AVT5) (Saccharomyces cerevisiae (strain ATCC 204508 / S288c) (Baker's yeast)).